The primary structure comprises 1168 residues: Transcription-repair-coupling factor (1168 aa).

Residues 633-794 form the Helicase ATP-binding domain; the sequence is DMQKSRPMDR…MLGVRDLSVI (162 aa). Position 646–653 (646–653) interacts with ATP; it reads GDVGYGKT. Residues 747–750 carry the DEEQ box motif; that stretch reads DEEQ. Residues 808–969 enclose the Helicase C-terminal domain; sequence VLEQNMSFIK…GFKIAMRDLN (162 aa).

In the N-terminal section; belongs to the UvrB family. The protein in the C-terminal section; belongs to the helicase family. RecG subfamily.

The protein resides in the cytoplasm. Its function is as follows. Couples transcription and DNA repair by recognizing RNA polymerase (RNAP) stalled at DNA lesions. Mediates ATP-dependent release of RNAP and its truncated transcript from the DNA, and recruitment of nucleotide excision repair machinery to the damaged site. The protein is Transcription-repair-coupling factor of Staphylococcus aureus (strain MSSA476).